Reading from the N-terminus, the 591-residue chain is Probable translation initiation factor IF-2 (591 aa).

Positions 7–223 constitute a tr-type G domain; it reads LRTPIVCVMG…LLGLAQRFLE (217 aa). The G1 stretch occupies residues 16 to 23; that stretch reads GHVDHGKT. 16–23 serves as a coordination point for GTP; it reads GHVDHGKT. The G2 stretch occupies residues 41 to 45; it reads AITQH. The G3 stretch occupies residues 78–81; it reads DTPG. Residues 78 to 82 and 132 to 135 contribute to the GTP site; these read DTPGH and NKID. Residues 132 to 135 are G4; the sequence is NKID. The interval 200 to 202 is G5; it reads SAI.

Belongs to the TRAFAC class translation factor GTPase superfamily. Classic translation factor GTPase family. IF-2 subfamily.

In terms of biological role, function in general translation initiation by promoting the binding of the formylmethionine-tRNA to ribosomes. Seems to function along with eIF-2. This chain is Probable translation initiation factor IF-2, found in Methanococcoides burtonii (strain DSM 6242 / NBRC 107633 / OCM 468 / ACE-M).